Here is a 93-residue protein sequence, read N- to C-terminus: Large ribosomal subunit protein uL23 (93 aa).

It belongs to the universal ribosomal protein uL23 family. In terms of assembly, part of the 50S ribosomal subunit. Contacts protein L29, and trigger factor when it is bound to the ribosome.

One of the early assembly proteins it binds 23S rRNA. One of the proteins that surrounds the polypeptide exit tunnel on the outside of the ribosome. Forms the main docking site for trigger factor binding to the ribosome. The chain is Large ribosomal subunit protein uL23 from Campylobacter hominis (strain ATCC BAA-381 / DSM 21671 / CCUG 45161 / LMG 19568 / NCTC 13146 / CH001A).